We begin with the raw amino-acid sequence, 509 residues long: Photosystem II CP47 reaction center protein (509 aa).

The next 6 membrane-spanning stretches (helical) occupy residues 21-36 (AVHM…WAGS), 101-115 (IVFS…IWHW), 140-156 (GIHL…FGAF), 203-218 (IAAG…FHLS), 237-253 (VLSS…AFVV), and 458-473 (SFAL…HGSR).

Belongs to the PsbB/PsbC family. PsbB subfamily. PSII is composed of 1 copy each of membrane proteins PsbA, PsbB, PsbC, PsbD, PsbE, PsbF, PsbH, PsbI, PsbJ, PsbK, PsbL, PsbM, PsbT, PsbX, PsbY, PsbZ, Psb30/Ycf12, at least 3 peripheral proteins of the oxygen-evolving complex and a large number of cofactors. It forms dimeric complexes. Requires Binds multiple chlorophylls. PSII binds additional chlorophylls, carotenoids and specific lipids. as cofactor.

It localises to the plastid. Its subcellular location is the chloroplast thylakoid membrane. One of the components of the core complex of photosystem II (PSII). It binds chlorophyll and helps catalyze the primary light-induced photochemical processes of PSII. PSII is a light-driven water:plastoquinone oxidoreductase, using light energy to abstract electrons from H(2)O, generating O(2) and a proton gradient subsequently used for ATP formation. In Populus deltoides (Eastern poplar), this protein is Photosystem II CP47 reaction center protein.